A 290-amino-acid polypeptide reads, in one-letter code: Short neuropeptide F (290 aa).

The first 32 residues, 1 to 32 (MFRFNPQLSHGCALALICCLLNLLMMHQPTNA), serve as a signal peptide directing secretion. The propeptide occupies 33–87 (ELSPVVQGEFFLPILPDDHPPNTDTSFGGPISNLYDNLLQREYAGPVVFPNHQVE). Phenylalanine amide is present on residues phenylalanine 100 and phenylalanine 134. Residues 138–290 (DPTLPQMRRT…IETSSIAPKN (153 aa)) constitute a propeptide that is removed on maturation. A disordered region spans residues 238 to 290 (VAGYANDGDDTEAQLDEDTSEFQREARKPMRLRWGRSTGKAPQIETSSIAPKN). Positions 244 to 257 (DGDDTEAQLDEDTS) are enriched in acidic residues. The span at 281-290 (IETSSIAPKN) shows a compositional bias: polar residues.

This sequence belongs to the NPY family.

It localises to the secreted. In terms of biological role, plays a role in controlling food intake and regulating body size. The chain is Short neuropeptide F from Drosophila pseudoobscura pseudoobscura (Fruit fly).